Consider the following 485-residue polypeptide: Cytoplasmic tRNA 2-thiolation protein 2 (485 aa).

It belongs to the CTU2/NCS2 family.

It is found in the cytoplasm. It functions in the pathway tRNA modification; 5-methoxycarbonylmethyl-2-thiouridine-tRNA biosynthesis. In terms of biological role, plays a central role in 2-thiolation of mcm(5)S(2)U at tRNA wobble positions of tRNA(Lys), tRNA(Glu) and tRNA(Gln). May act by forming a heterodimer with NCS6 that ligates sulfur from thiocarboxylated URM1 onto the uridine of tRNAs at wobble position. Prior mcm(5) tRNA modification by the elongator complex is required for 2-thiolation. May also be involved in protein urmylation. The sequence is that of Cytoplasmic tRNA 2-thiolation protein 2 from Vanderwaltozyma polyspora (strain ATCC 22028 / DSM 70294 / BCRC 21397 / CBS 2163 / NBRC 10782 / NRRL Y-8283 / UCD 57-17) (Kluyveromyces polysporus).